A 510-amino-acid polypeptide reads, in one-letter code: Inner membrane protein YeeR (510 aa).

A topological domain (cytoplasmic) is located at residue methionine 1. Residues 2 to 22 form a helical membrane-spanning segment; sequence LQIVGALILLIAGFAILRLLF. Over 23-30 the chain is Periplasmic; that stretch reads RALISTAS. Residues 31-51 traverse the membrane as a helical segment; it reads ALAGLILLCLFGPALLAGYIT. The Cytoplasmic segment spans residues 52–61; it reads ERITRLFHIR. Residues 62 to 82 form a helical membrane-spanning segment; it reads WLAGVFLTIAGMIISFMWGLD. At 83-94 the chain is on the periplasmic side; that stretch reads GKHIALEAHTFD. Residues 95 to 115 traverse the membrane as a helical segment; the sequence is SVKFILTTALAGGLLAVPLQI. Residues 116–136 lie on the Cytoplasmic side of the membrane; that stretch reads KNIQQNGITPEDISKEINGYY. The chain crosses the membrane as a helical span at residues 137 to 157; that stretch reads CCFYTAFFLMACSACAPLIAL. The Periplasmic segment spans residues 158–164; the sequence is QYDISPS. The chain crosses the membrane as a helical span at residues 165-185; that stretch reads LMWWGGLLYWLAALVTLLWAA. At 186-510 the chain is on the cytoplasmic side; sequence SQIQALKKLT…KIREGKVEER (325 aa).

The protein resides in the cell inner membrane. In Escherichia coli (strain K12), this protein is Inner membrane protein YeeR (yeeR).